We begin with the raw amino-acid sequence, 530 residues long: FSD1-like protein (530 aa).

Methionine 1 carries the N-acetylmethionine modification. Residues 102 to 141 (KQEQARKSQELQSQISQCNNALENSEELLEFATRSLDIKE) are a coiled coil. Residues 137 to 194 (LDIKEPEEFSKAARQIKDRVTMASAFRLSLKPKVSDNMTHLMVDFSQERQMLQTLKFL) form the COS domain. The Fibronectin type-III domain maps to 196 to 300 (VPKAPEIDPV…DPVTLETKAL (105 aa)). The region spanning 300–506 (LNFNLDNSSS…LSTGMQVPSA (207 aa)) is the B30.2/SPRY domain. A disordered region spans residues 322–366 (WDPTGGKGQESKIKGKENKGRSGTPSPKRTSVGSRPPAVRGSRDR). The segment covering 330-341 (QESKIKGKENKG) has biased composition (basic and acidic residues). A compositionally biased stretch (polar residues) spans 342 to 354 (RSGTPSPKRTSVG). Residues serine 520 and serine 523 each carry the phosphoserine modification.

In Homo sapiens (Human), this protein is FSD1-like protein (FSD1L).